A 131-amino-acid polypeptide reads, in one-letter code: Sirohydrochlorin cobaltochelatase (131 aa).

Catalysis depends on His-12, which acts as the Proton acceptor. Residues His-12 and His-78 each contribute to the Co(2+) site. His-12 and His-78 together coordinate Ni(2+). 73–78 (LASGVH) contacts substrate.

This sequence belongs to the CbiX family. CbiXS subfamily. In terms of assembly, homotetramer; dimer of dimers.

It catalyses the reaction Co-sirohydrochlorin + 2 H(+) = sirohydrochlorin + Co(2+). It carries out the reaction Ni-sirohydrochlorin + 2 H(+) = sirohydrochlorin + Ni(2+). It functions in the pathway cofactor biosynthesis; adenosylcobalamin biosynthesis; cob(II)yrinate a,c-diamide from sirohydrochlorin (anaerobic route): step 1/10. Catalyzes the insertion of Co(2+) into sirohydrochlorin as part of the anaerobic pathway to cobalamin biosynthesis. Involved in the biosynthesis of the unique nickel-containing tetrapyrrole coenzyme F430, the prosthetic group of methyl-coenzyme M reductase (MCR), which plays a key role in methanogenesis and anaerobic methane oxidation. Catalyzes the insertion of Ni(2+) into sirohydrochlorin to yield Ni-sirohydrochlorin. This chain is Sirohydrochlorin cobaltochelatase, found in Methanococcoides burtonii (strain DSM 6242 / NBRC 107633 / OCM 468 / ACE-M).